A 352-amino-acid chain; its full sequence is tRNA pseudouridine synthase D (352 aa).

Residue aspartate 81 is the Nucleophile of the active site. The region spanning 157-303 (GIPNYFGAQR…MEHERRILRL (147 aa)) is the TRUD domain.

This sequence belongs to the pseudouridine synthase TruD family.

The catalysed reaction is uridine(13) in tRNA = pseudouridine(13) in tRNA. In terms of biological role, responsible for synthesis of pseudouridine from uracil-13 in transfer RNAs. The chain is tRNA pseudouridine synthase D from Pseudomonas syringae pv. syringae (strain B728a).